The primary structure comprises 249 residues: Adenosylcobinamide-GDP ribazoletransferase (249 aa).

6 helical membrane passes run 36–56 (LVGFLLGSIAAGVCYAMHSIG), 57–77 (LNLAADVLGLVTIITLTGGLH), 106–126 (VGAMGVIALATVLLLKIAFLF), 133–153 (KLTAFIMAPMAGRWAMVLAIT), 188–208 (LWLFGLPGLALLGIVFFITWL), and 226–246 (GALGEMIETWVIFLILLGQQI).

The protein belongs to the CobS family. Mg(2+) serves as cofactor.

It is found in the cell membrane. The catalysed reaction is alpha-ribazole + adenosylcob(III)inamide-GDP = adenosylcob(III)alamin + GMP + H(+). The enzyme catalyses alpha-ribazole 5'-phosphate + adenosylcob(III)inamide-GDP = adenosylcob(III)alamin 5'-phosphate + GMP + H(+). It functions in the pathway cofactor biosynthesis; adenosylcobalamin biosynthesis; adenosylcobalamin from cob(II)yrinate a,c-diamide: step 7/7. Joins adenosylcobinamide-GDP and alpha-ribazole to generate adenosylcobalamin (Ado-cobalamin). Also synthesizes adenosylcobalamin 5'-phosphate from adenosylcobinamide-GDP and alpha-ribazole 5'-phosphate. The sequence is that of Adenosylcobinamide-GDP ribazoletransferase from Desulforamulus reducens (strain ATCC BAA-1160 / DSM 100696 / MI-1) (Desulfotomaculum reducens).